Reading from the N-terminus, the 741-residue chain is Mitofusin-1 (741 aa).

The Cytoplasmic portion of the chain corresponds to 1–584 (MAETVSPLKH…AAQEELMITL (584 aa)). The tract at residues 9-73 (KHFVLAKKAI…LAVIGEVLSR (65 aa)) is part of a helix bundle domain, formed by helices from N-terminal and C-terminal regions. Residues 72–321 (SRRHMKVAFF…ARLQEFQNFE (250 aa)) enclose the Dynamin-type G domain. A G1 motif region spans residues 82 to 89 (GRTSSGKS). Residue 85–90 (SSGKSS) participates in GTP binding. A G2 motif region spans residues 108–109 (TT). Positions 178 to 181 (DSPG) are G3 motif. 237–240 (NRWD) provides a ligand contact to GTP. A G4 motif region spans residues 237 to 240 (NRWD). A region of interest (G5 motif) is located at residue E266. GTP is bound by residues S284 and K286. The interval 338 to 364 (EQHTIRAKQILDTVKNILDSVNVAAAE) is part of a helix bundle domain, formed by helices from N-terminal and C-terminal regions. Residues 371–408 (EEREDQIDRLDFIRNQMNLLTLDVKKKIKEVTEEVANK) are a coiled coil. A helical transmembrane segment spans residues 585-605 (ITGLASLTSRTSMGIIVVGGV). Over 606 to 608 (IWK) the chain is Mitochondrial intermembrane. A helical transmembrane segment spans residues 609 to 629 (TVGWKLISVTLSMYGALYLYE). Over 630 to 741 (RLTWTTRAKE…QFLHPSSGES (112 aa)) the chain is Cytoplasmic. The stretch at 677 to 735 (FARLCQQVDVTQKHLEEEIARLSKEIDQLEKIQNNSKLLRNKAVQLESELENFSKQFLH) forms a coiled coil. Residues 703–734 (DQLEKIQNNSKLLRNKAVQLESELENFSKQFL) are part of a helix bundle domain, formed by helices from N-terminal and C-terminal regions.

Belongs to the TRAFAC class dynamin-like GTPase superfamily. Dynamin/Fzo/YdjA family. Mitofusin subfamily. In terms of assembly, homodimer, also in the absence of bound GTP. Forms higher oligomers in the presence of a transition state GTP analog. Forms homomultimers and heteromultimers with MFN2. Oligomerization is essential for mitochondrion fusion. Component of a high molecular weight multiprotein complex. Interacts with VAT1. Interacts with THG1L; THG1L probably functions as a guanyl-nucleotide exchange factor/GEF, activating MFN1. Post-translationally, ubiquitinated by MARCHF5. When mitochondria are depolarized and dysfunctional, it is ubiquitinated by a SCF (SKP1-CUL1-F-box protein) E3 ubiquitin-protein ligase complex that contains FBXO7 and PRKN. Ubiquitinated by non-degradative ubiquitin by PRKN, promoting mitochondrial fusion; deubiquitination by USP30 inhibits mitochondrial fusion. As to expression, detected in adult heart. Detected in embryos (at protein level). Widely expressed.

The protein localises to the mitochondrion outer membrane. It catalyses the reaction GTP + H2O = GDP + phosphate + H(+). Its function is as follows. Mitochondrial outer membrane GTPase that mediates mitochondrial clustering and fusion. Membrane clustering requires GTPase activity. It may involve a major rearrangement of the coiled coil domains. Mitochondria are highly dynamic organelles, and their morphology is determined by the equilibrium between mitochondrial fusion and fission events. Overexpression induces the formation of mitochondrial networks (in vitro). Has low GTPase activity. This chain is Mitofusin-1 (Mfn1), found in Mus musculus (Mouse).